Here is a 211-residue protein sequence, read N- to C-terminus: ATP phosphoribosyltransferase (211 aa).

Belongs to the ATP phosphoribosyltransferase family. Short subfamily. Heteromultimer composed of HisG and HisZ subunits.

The protein localises to the cytoplasm. The catalysed reaction is 1-(5-phospho-beta-D-ribosyl)-ATP + diphosphate = 5-phospho-alpha-D-ribose 1-diphosphate + ATP. It participates in amino-acid biosynthesis; L-histidine biosynthesis; L-histidine from 5-phospho-alpha-D-ribose 1-diphosphate: step 1/9. Functionally, catalyzes the condensation of ATP and 5-phosphoribose 1-diphosphate to form N'-(5'-phosphoribosyl)-ATP (PR-ATP). Has a crucial role in the pathway because the rate of histidine biosynthesis seems to be controlled primarily by regulation of HisG enzymatic activity. This Bacillus cereus (strain G9842) protein is ATP phosphoribosyltransferase.